The sequence spans 393 residues: MTHTTLFTSESVSEGHPDKVADQISDAVLDALISQDPNCRVACEAVVKSGMVFVAGEITTNAWADVEQITRNTVLQIGYNDPHLGFDGETCAVVTAIGKQSPDIVMGVDGREDQELGAGDQGLMFGYASRETDVFMPAPITYAHRLVRQQALLRKNGRLPWLRPDAKSQVTLRYENGKPVAADCIVLSTQHSPEISQESLREAVIDEIIKPIMPPHWLDKHTRFLVNPTGRFVIGGPVGDCGLTGRKIIVDTYGGMARHGGGCFSGKDPSKVDRSGAYAARYVAKNIVAGGLADRCEIQVSYAIGVAEPTSISVETFGTGKIDEVRTQQLIKEHFDLRPGKIIEELNLLRSIYKATATYGHFGREEPEFTWERTDKAEILREAAGLAAANVTN.

His16 serves as a coordination point for ATP. Asp18 serves as a coordination point for Mg(2+). K(+) is bound at residue Glu44. Glu57 and Gln100 together coordinate L-methionine. The tract at residues 100–110 is flexible loop; it reads QSPDIVMGVDG. Residues 165–167, 231–232, Asp240, 246–247, and Lys267 contribute to the ATP site; these read DAK, RF, and RK. Asp240 serves as a coordination point for L-methionine. Residue Lys271 participates in L-methionine binding.

The protein belongs to the AdoMet synthase family. As to quaternary structure, homotetramer; dimer of dimers. It depends on Mg(2+) as a cofactor. K(+) serves as cofactor.

The protein localises to the cytoplasm. The catalysed reaction is L-methionine + ATP + H2O = S-adenosyl-L-methionine + phosphate + diphosphate. It functions in the pathway amino-acid biosynthesis; S-adenosyl-L-methionine biosynthesis; S-adenosyl-L-methionine from L-methionine: step 1/1. Functionally, catalyzes the formation of S-adenosylmethionine (AdoMet) from methionine and ATP. The overall synthetic reaction is composed of two sequential steps, AdoMet formation and the subsequent tripolyphosphate hydrolysis which occurs prior to release of AdoMet from the enzyme. This is S-adenosylmethionine synthase from Coxiella burnetii (strain Dugway 5J108-111).